Reading from the N-terminus, the 215-residue chain is UPF0502 protein YceH (215 aa).

K80 bears the N6-acetyllysine mark.

The protein belongs to the UPF0502 family.

In Escherichia fergusonii (strain ATCC 35469 / DSM 13698 / CCUG 18766 / IAM 14443 / JCM 21226 / LMG 7866 / NBRC 102419 / NCTC 12128 / CDC 0568-73), this protein is UPF0502 protein YceH.